A 91-amino-acid chain; its full sequence is MSGVGEKASGTTKTPADFLKSIRGKPVVVKLNSGVDYRGILTCLDGYMNIAMEQTEEYVNGQLKNTYGDAFVRGNNVLYISTTKGTLSDGA.

Positions 14–86 (TPADFLKSIR…VLYISTTKGT (73 aa)) constitute a Sm domain.

This sequence belongs to the snRNP Sm proteins family. In terms of assembly, component of the heptameric LSM1-LSM7 complex that forms a seven-membered ring structure with a donut shape. The LSM subunits are arranged in the order LSM1, LSM2, LSM3, LSM6, LSM5, LSM7 and LSM4. Component of the heptameric LSM2-LSM8 complex that forms a seven-membered ring structure with a donut shape. The LSM subunits are arranged in the order LSM8, LSM2, LSM3, LSM6, LSM5, LSM7 and LSM4. LSM6B subunit interacts only with its two neighboring subunits, LSM3A or LSM3B and LSM5. In terms of tissue distribution, expressed in roots, leaves, stems, flowers and siliques.

It is found in the cytoplasm. It localises to the nucleus. In terms of biological role, component of LSM protein complexes, which are involved in RNA processing. Component of the cytoplasmic LSM1-LSM7 complex which is involved in mRNA degradation by promoting decapping and leading to accurate 5'-3' mRNA decay. The cytoplasmic LSM1-LSM7 complex regulates developmental gene expression by the decapping of specific development-related transcripts. Component of the nuclear LSM2-LSM8 complex which is involved splicing nuclear mRNAs. LSM2-LSM8 binds directly to the U6 small nuclear RNAs (snRNAs) and is essential for accurate splicing of selected development-related mRNAs through the stabilization of the spliceosomal U6 snRNA. Plays a critical role in the regulation of development-related gene expression. This Arabidopsis thaliana (Mouse-ear cress) protein is Sm-like protein LSM36B.